The sequence spans 203 residues: Vexin (203 aa).

The span at 59–70 (HRTDRRDGEGRW) shows a compositional bias: basic and acidic residues. The disordered stretch occupies residues 59–101 (HRTDRRDGEGRWSGRFQNPRLQGPHPAKTPARPVGTSEPKSAN).

It belongs to the vexin family.

It is found in the cell membrane. Its subcellular location is the nucleus. Required for neurogenesis in the neural plate and retina. Strongly cooperates with neural bHLH factors to promote neurogenesis. The protein is Vexin of Bos taurus (Bovine).